A 1262-amino-acid chain; its full sequence is Ras-specific guanine nucleotide-releasing factor 1 (1262 aa).

The 109-residue stretch at 22–130 (DGTRKGYLSK…WVAAIARASY (109 aa)) folds into the PH 1 domain. Serine 71 carries the phosphoserine; by PLK2 modification. The 26-residue stretch at 208 to 233 (KKIKKVQSFLRGWLCRRKWKNIIQDY) folds into the IQ domain. One can recognise a DH domain in the interval 244–430 (KRNQVVFSML…EELSRIMHDE (187 aa)). A PH 2 domain is found at 460–588 (TFVRQGSLMQ…WTSDIIQCVD (129 aa)). 2 positions are modified to phosphoserine; by PLK2: serine 581 and serine 617. The 115-residue stretch at 635 to 749 (KVLQIRYASV…RRRKLSLNIP (115 aa)) folds into the N-terminal Ras-GEF domain. A disordered region spans residues 714-738 (DAPKSPRASRKFSSPPPLAIGTSSP). Serine 745 is subject to Phosphoserine. Serine 766 is modified (phosphoserine; by PLK2). Residues 800–854 (EEIDVPATIPEKPGELSASRKHSSDVLKEESEDDQNHSDEDNTEVSPVKSPPTPK) form a disordered region. A compositionally biased stretch (basic and acidic residues) spans 821–839 (HSSDVLKEESEDDQNHSDE). The Ras-GEF domain occupies 1027–1259 (PALEIAEQLT…YESSLLIEPK (233 aa)).

As to quaternary structure, homooligomer and heterooligomer with RASGRF2. Interacts with USP8, thereby regulating its stability. Post-translationally, phosphorylated by PLK2, leading to ubiquitination and degradation by the proteasome. Ubiquitinated and degraded following phosphorylation by PLK2. In terms of processing, phosphorylated by SRC and LCK. Phosphorylation by LCK increases its capacity to stimulate the GDP/GTP exchange on Ras, whereas its phosphorylation by SRC seems not to have an effect on stimulation activity. In terms of tissue distribution, brain.

In terms of biological role, promotes the exchange of Ras-bound GDP by GTP. The chain is Ras-specific guanine nucleotide-releasing factor 1 (Rasgrf1) from Mus musculus (Mouse).